A 277-amino-acid polypeptide reads, in one-letter code: Small ribosomal subunit protein mS23 (277 aa).

Disordered regions lie at residues 48 to 85 (APSH…KKPS) and 232 to 277 (LAAF…GPPI). Over residues 244–269 (ESGESEDEIPLIEEEDAIGASEESET) the composition is skewed to acidic residues.

Belongs to the mitochondrion-specific ribosomal protein mS23 family. As to quaternary structure, component of the mitochondrial small ribosomal subunit.

It localises to the mitochondrion. This is Small ribosomal subunit protein mS23 (RSM25) from Ajellomyces capsulatus (strain NAm1 / WU24) (Darling's disease fungus).